Reading from the N-terminus, the 345-residue chain is GDP-mannose transporter (345 aa).

The Cytoplasmic segment spans residues 1–8; it reads MDNHMLNR. The chain crosses the membrane as a helical span at residues 9–29; it reads ISKSPILPVVSYCMASILMTL. The Lumenal segment spans residues 30–40; it reads TNKYVLSSPGY. The helical transmembrane segment at 41 to 61 threads the bilayer; that stretch reads NMNFLLLTVQSTVCVAAIGIL. Over 62–78 the chain is Cytoplasmic; that stretch reads KRLKVINYRDFDFREAK. The chain crosses the membrane as a helical span at residues 79 to 101; it reads FWFPISFLLVAMIYTASKALQFL. The Lumenal portion of the chain corresponds to 102–104; the sequence is SVP. Residues 105-127 form a helical membrane-spanning segment; the sequence is VYTIFKNLTIIIIAYGEVLWFGG. The Cytoplasmic segment spans residues 128–131; the sequence is HVTA. Residues 132–150 form a helical membrane-spanning segment; sequence LTLFSFGLMVLSSIVAAWA. At 151 to 161 the chain is on the lumenal side; it reads DIQSSSFASQT. Residues 162-182 traverse the membrane as a helical segment; the sequence is LNSGYLWMVLNCLTNAAFVLA. At 183–194 the chain is on the cytoplasmic side; it reads MRKRIKLTNFRD. The helical transmembrane segment at 195–215 threads the bilayer; sequence FDTMFYNNLLSIPVLVICTLF. The Lumenal portion of the chain corresponds to 216-233; sequence TEDWSAENIAQNFPPDAK. Residues 234–254 form a helical membrane-spanning segment; sequence FGVLMAMAISGVSSVGISYTS. The Cytoplasmic portion of the chain corresponds to 255 to 264; sequence AWCVRVTSST. The chain crosses the membrane as a helical span at residues 265–285; that stretch reads TYSMVGALNKLPLAIAGLVFF. At 286 to 288 the chain is on the lumenal side; it reads DAP. The chain crosses the membrane as a helical span at residues 289–309; that stretch reads ITFGSVTAILLGFISGVVYAV. Residues 310 to 345 are Cytoplasmic-facing; sequence AKSQQQRQKDPATILPMTHNPVSASSQSMRDSLSKS. Residues 319 to 345 are disordered; the sequence is DPATILPMTHNPVSASSQSMRDSLSKS. A compositionally biased stretch (polar residues) spans 329–345; the sequence is NPVSASSQSMRDSLSKS.

This sequence belongs to the TPT transporter family. SLC35D subfamily. In terms of assembly, homooligomer.

The protein resides in the golgi apparatus membrane. Its subcellular location is the cytoplasmic vesicle membrane. It is found in the endoplasmic reticulum membrane. Involved in the import of GDP-mannose from the cytoplasm into the Golgi lumen. The protein is GDP-mannose transporter (vrg4) of Schizosaccharomyces pombe (strain 972 / ATCC 24843) (Fission yeast).